Reading from the N-terminus, the 508-residue chain is Light-independent protochlorophyllide reductase subunit B (508 aa).

A [4Fe-4S] cluster-binding site is contributed by D36. D294 functions as the Proton donor in the catalytic mechanism. 429-430 lines the substrate pocket; it reads GM.

It belongs to the ChlB/BchB/BchZ family. Protochlorophyllide reductase is composed of three subunits; ChlL, ChlN and ChlB. Forms a heterotetramer of two ChlB and two ChlN subunits. Requires [4Fe-4S] cluster as cofactor.

The protein localises to the plastid. Its subcellular location is the chloroplast. It catalyses the reaction chlorophyllide a + oxidized 2[4Fe-4S]-[ferredoxin] + 2 ADP + 2 phosphate = protochlorophyllide a + reduced 2[4Fe-4S]-[ferredoxin] + 2 ATP + 2 H2O. The protein operates within porphyrin-containing compound metabolism; chlorophyll biosynthesis (light-independent). In terms of biological role, component of the dark-operative protochlorophyllide reductase (DPOR) that uses Mg-ATP and reduced ferredoxin to reduce ring D of protochlorophyllide (Pchlide) to form chlorophyllide a (Chlide). This reaction is light-independent. The NB-protein (ChlN-ChlB) is the catalytic component of the complex. The protein is Light-independent protochlorophyllide reductase subunit B of Pyropia yezoensis (Susabi-nori).